A 147-amino-acid polypeptide reads, in one-letter code: uncharacterized protein (147 aa).

2 consecutive transmembrane segments (helical) span residues 41–61 and 67–87; these read LANFLACLGLLAISSSSALLI and LLAASATAPSAMTAIFTSFPL.

Its subcellular location is the cell membrane. This is an uncharacterized protein from Pyrococcus horikoshii (strain ATCC 700860 / DSM 12428 / JCM 9974 / NBRC 100139 / OT-3).